We begin with the raw amino-acid sequence, 170 residues long: Flavin reductase (NADPH) (170 aa).

This sequence belongs to the non-flavoprotein flavin reductase family.

It carries out the reaction reduced riboflavin + NADP(+) = riboflavin + NADPH + 2 H(+). Catalyzes the NADH-dependent reduction of FAD to provide FADH2 for the halogenase RebH. This is Flavin reductase (NADPH) (rbmH) from Lentzea aerocolonigenes (Lechevalieria aerocolonigenes).